The sequence spans 367 residues: MSLRRIMVTAVRNLHPVTLLPSPRINILYGANGSGKTSVLEAVHLLGLARSFRSSRLNPVIQYEQPACTVFGEVELTEGGTCKLGVSRERQGEFTIRIDGQNARSAAQLAELLPLQLINPDSFRLLEGAPKIRRQFLDWGVFHVEPRFLPAWQRLQKALRQRNSWLRHGTLDPASQAAWDRELCLASAEIDEYRRNYIKALKPVFERTLSELVELDGLTLSYYRGWDKDRELQEVLASSLLRDQQMGHTQAGPQRADLRLRLAGNNAADILSRGQQKLVVCALRIAQGHLVSQARRGHCIYLVDDLPSELDDQHRRALCRLLEELRCQVFITCVDHELLREGWQTETPVALFHVEQGRITQTHDHRE.

Gly30–Thr37 is a binding site for ATP.

It belongs to the RecF family.

The protein localises to the cytoplasm. Its function is as follows. The RecF protein is involved in DNA metabolism; it is required for DNA replication and normal SOS inducibility. RecF binds preferentially to single-stranded, linear DNA. It also seems to bind ATP. This Pseudomonas putida (strain GB-1) protein is DNA replication and repair protein RecF.